We begin with the raw amino-acid sequence, 75 residues long: Acyl carrier protein (75 aa).

One can recognise a Carrier domain in the interval 1 to 75; sequence MIFEKVRDII…DVVEYLSNLE (75 aa). S35 is subject to O-(pantetheine 4'-phosphoryl)serine.

This sequence belongs to the acyl carrier protein (ACP) family. Post-translationally, 4'-phosphopantetheine is transferred from CoA to a specific serine of apo-ACP by AcpS. This modification is essential for activity because fatty acids are bound in thioester linkage to the sulfhydryl of the prosthetic group.

Its subcellular location is the cytoplasm. Its pathway is lipid metabolism; fatty acid biosynthesis. Functionally, carrier of the growing fatty acid chain in fatty acid biosynthesis. The polypeptide is Acyl carrier protein (Thermoanaerobacter pseudethanolicus (strain ATCC 33223 / 39E) (Clostridium thermohydrosulfuricum)).